The primary structure comprises 356 residues: NADH-quinone oxidoreductase subunit H (356 aa).

8 helical membrane passes run 18 to 38, 87 to 107, 120 to 140, 166 to 186, 202 to 222, 265 to 285, 292 to 312, and 328 to 348; these read IVMVAQSVLLLVVLLIAIAYI, GVFLLAPLVTCVLALAAWAVI, VGILYIFAISSLSIYGIIMAG, IGFVFITVLLCAGSLNLSAIV, WLTFLNWYWLPLLPMFVVFYV, AITTMCAMGAILFMGGWLPPI, WVPGVIWFSLKLFFMFFLFAM, and LGWKVFLPLSLAMVVIVAGVL.

The protein belongs to the complex I subunit 1 family. In terms of assembly, NDH-1 is composed of 14 different subunits. Subunits NuoA, H, J, K, L, M, N constitute the membrane sector of the complex.

The protein resides in the cell inner membrane. The catalysed reaction is a quinone + NADH + 5 H(+)(in) = a quinol + NAD(+) + 4 H(+)(out). Functionally, NDH-1 shuttles electrons from NADH, via FMN and iron-sulfur (Fe-S) centers, to quinones in the respiratory chain. The immediate electron acceptor for the enzyme in this species is believed to be ubiquinone. Couples the redox reaction to proton translocation (for every two electrons transferred, four hydrogen ions are translocated across the cytoplasmic membrane), and thus conserves the redox energy in a proton gradient. This subunit may bind ubiquinone. The chain is NADH-quinone oxidoreductase subunit H from Nitrobacter hamburgensis (strain DSM 10229 / NCIMB 13809 / X14).